The following is a 345-amino-acid chain: Heat-inducible transcription repressor HrcA (345 aa).

It belongs to the HrcA family.

In terms of biological role, negative regulator of class I heat shock genes (grpE-dnaK-dnaJ and groELS operons). Prevents heat-shock induction of these operons. The protein is Heat-inducible transcription repressor HrcA of Listeria monocytogenes serotype 1/2a (strain 10403S).